The chain runs to 274 residues: Orotidine 5'-phosphate decarboxylase (274 aa).

The active-site Proton donor is lysine 95.

Belongs to the OMP decarboxylase family. Type 2 subfamily.

The catalysed reaction is orotidine 5'-phosphate + H(+) = UMP + CO2. It participates in pyrimidine metabolism; UMP biosynthesis via de novo pathway; UMP from orotate: step 2/2. This chain is Orotidine 5'-phosphate decarboxylase, found in Paracidovorax citrulli (strain AAC00-1) (Acidovorax citrulli).